The chain runs to 331 residues: Ribosomal RNA small subunit methyltransferase H (331 aa).

S-adenosyl-L-methionine contacts are provided by residues Gly-38–Tyr-40, Asp-56, Phe-83, Asp-100, and Gln-107. Positions Asp-287 to Arg-331 are disordered.

This sequence belongs to the methyltransferase superfamily. RsmH family.

Its subcellular location is the cytoplasm. It catalyses the reaction cytidine(1402) in 16S rRNA + S-adenosyl-L-methionine = N(4)-methylcytidine(1402) in 16S rRNA + S-adenosyl-L-homocysteine + H(+). Its function is as follows. Specifically methylates the N4 position of cytidine in position 1402 (C1402) of 16S rRNA. The polypeptide is Ribosomal RNA small subunit methyltransferase H (Cereibacter sphaeroides (strain ATCC 17023 / DSM 158 / JCM 6121 / CCUG 31486 / LMG 2827 / NBRC 12203 / NCIMB 8253 / ATH 2.4.1.) (Rhodobacter sphaeroides)).